The following is a 321-amino-acid chain: MSFTPKNLNVKYTFNVSRNRSKVWLISGFAVLISFLGFFFSWTNQSIGFPLRPGFDFTGGTQIILERKCDSECNKITTINISEAFNNAKFSNQETSQKLFDARIQFLDGYKSLLIRSPELSPSESKEVIESIEFVAGPLEDGGQSVESIGPTLGAKLLQTTLISLLVAFSCVAIYISIRFDRMFSLYALLALFHDVLIVCGVFSWLGIINEVEVNSLFAVALLTIAGYSVNDTVVVFDRIREINKQESRMNFKQKVDFAVSATLTRTLYTSGTTLLPLIALIFFGGTTLYWFAIALALGVVVGSWSSIALVPSLLTLRKEN.

The next 6 membrane-spanning stretches (helical) occupy residues 23–43, 158–178, 189–209, 217–237, 258–280, and 290–312; these read VWLI…FSWT, LQTT…YISI, LLAL…LGII, LFAV…VVVF, FAVS…PLIA, and YWFA…ALVP.

This sequence belongs to the SecD/SecF family. SecF subfamily. Forms a complex with SecD. Part of the essential Sec protein translocation apparatus which comprises SecA, SecYEG and auxiliary proteins SecDF. Other proteins may also be involved.

It localises to the cell inner membrane. Its function is as follows. Part of the Sec protein translocase complex. Interacts with the SecYEG preprotein conducting channel. SecDF uses the proton motive force (PMF) to complete protein translocation after the ATP-dependent function of SecA. Probably participates in protein translocation into and across both the cytoplasmic and thylakoid membranes in cyanobacterial cells. This Prochlorococcus marinus (strain SARG / CCMP1375 / SS120) protein is Protein translocase subunit SecF.